Consider the following 428-residue polypeptide: Adenosylmethionine-8-amino-7-oxononanoate aminotransferase (428 aa).

Tryptophan 52 is a binding site for substrate. 112-113 (GS) is a pyridoxal 5'-phosphate binding site. Tyrosine 144 contacts substrate. Aspartate 245 lines the pyridoxal 5'-phosphate pocket. Lysine 274 and glycine 307 together coordinate substrate. Residue lysine 274 is modified to N6-(pyridoxal phosphate)lysine. Residue 308–309 (PT) participates in pyridoxal 5'-phosphate binding. Position 391 (arginine 391) interacts with substrate.

It belongs to the class-III pyridoxal-phosphate-dependent aminotransferase family. BioA subfamily. As to quaternary structure, homodimer. Pyridoxal 5'-phosphate serves as cofactor.

The protein resides in the cytoplasm. It catalyses the reaction (8S)-8-amino-7-oxononanoate + S-adenosyl-L-methionine = S-adenosyl-4-methylsulfanyl-2-oxobutanoate + (7R,8S)-7,8-diammoniononanoate. The protein operates within cofactor biosynthesis; biotin biosynthesis; 7,8-diaminononanoate from 8-amino-7-oxononanoate (SAM route): step 1/1. Catalyzes the transfer of the alpha-amino group from S-adenosyl-L-methionine (SAM) to 7-keto-8-aminopelargonic acid (KAPA) to form 7,8-diaminopelargonic acid (DAPA). It is the only aminotransferase known to utilize SAM as an amino donor. The protein is Adenosylmethionine-8-amino-7-oxononanoate aminotransferase of Buchnera aphidicola subsp. Acyrthosiphon pisum (strain APS) (Acyrthosiphon pisum symbiotic bacterium).